The chain runs to 389 residues: MVTVEEYRKAQRAEGPATVMAIGTATPTNCVDQSTYPDYYFRITNSEHKTDLKEKFKRMCEKSMIKKRYMHLTEEILKENPSMCEYMAPSLDARQDIVVVEVPKLGKEAAQKAIKEWGQPKSKITHLVFCTTSGVDMPGCDYQLTKLLGLRPSVKRLMMYQQGCFAGGTVLRLAKDLAENNKGARVLVVCSEITAVTFRGPNDTHLDSLVGQALFGDGAGAIIIGSDPIPGVERPLFELVSAAQTLLPDSHGAIDGHLREVGLTFHLLKDVPGLISKNIEKSLEEAFKPLGISDWNSLFWIAHPGGPAILDQVEIKLGLKPEKLKATRNVLSDYGNMSSACVLFILDEMRKASAKEGLGTTGEGLEWGVLFGFGPGLTVETVVLHSVAT.

The active site involves C164.

Belongs to the thiolase-like superfamily. Chalcone/stilbene synthases family. Major expressed member of the gene family in various floral tissues and in seedlings treated with UV light. It is relatively low expressed in tissue culture material.

The enzyme catalyses (E)-4-coumaroyl-CoA + 3 malonyl-CoA + 3 H(+) = 2',4,4',6'-tetrahydroxychalcone + 3 CO2 + 4 CoA. It participates in secondary metabolite biosynthesis; flavonoid biosynthesis. Its function is as follows. The primary product of this enzyme is 4,2',4',6'-tetrahydroxychalcone (also termed naringenin-chalcone or chalcone) which can under specific conditions spontaneously isomerize into naringenin. The chain is Chalcone synthase A (CHSA) from Petunia hybrida (Petunia).